The primary structure comprises 414 residues: uncharacterized protein (414 aa).

Belongs to the MG032/MG096/MG288 family.

This is an uncharacterized protein from Mycoplasma genitalium (strain ATCC 33530 / DSM 19775 / NCTC 10195 / G37) (Mycoplasmoides genitalium).